The following is a 485-amino-acid chain: NADH-quinone oxidoreductase subunit N (485 aa).

A run of 14 helical transmembrane segments spans residues 8–28 (LIALSPLLIVGLTVVVVMLCI), 35–55 (FVNATMTVIGLNIALLSLYFV), 75–95 (FYTGLVLLASLATSTFAYPWL), 105–125 (FYLLVLIAALGGILLSSANHL), 127–147 (SLFIGIELLSLPLFGLVGYAF), 159–179 (YMLLSAAASSFLLFGMALIYA), 203–223 (LLAGLGMMIVGLGFKLSLVPF), 235–255 (PAPVSTFLATAGKIAVFGAVM), 271–291 (IVLGVIAFASILFGNVMAVSQ), 297–317 (LLGYSSIAHLGYLLVALIAVQ), 326–346 (VGVYLVGYLFSSLGAFGVVSL), 374–394 (AVMTVMMLSLAGIPMTLGFFG), 407–426 (LWWLTGAVVLGSAIGLYYYL), and 449–469 (ALTAGGVVVLISSIAVLFFGL).

The protein belongs to the complex I subunit 2 family. As to quaternary structure, NDH-1 is composed of 13 different subunits. Subunits NuoA, H, J, K, L, M, N constitute the membrane sector of the complex.

Its subcellular location is the cell inner membrane. The enzyme catalyses a quinone + NADH + 5 H(+)(in) = a quinol + NAD(+) + 4 H(+)(out). Functionally, NDH-1 shuttles electrons from NADH, via FMN and iron-sulfur (Fe-S) centers, to quinones in the respiratory chain. The immediate electron acceptor for the enzyme in this species is believed to be ubiquinone. Couples the redox reaction to proton translocation (for every two electrons transferred, four hydrogen ions are translocated across the cytoplasmic membrane), and thus conserves the redox energy in a proton gradient. The protein is NADH-quinone oxidoreductase subunit N of Pectobacterium carotovorum subsp. carotovorum (strain PC1).